A 156-amino-acid polypeptide reads, in one-letter code: Small ribosomal subunit protein uS7 (156 aa).

The protein belongs to the universal ribosomal protein uS7 family. Part of the 30S ribosomal subunit. Contacts proteins S9 and S11.

Functionally, one of the primary rRNA binding proteins, it binds directly to 16S rRNA where it nucleates assembly of the head domain of the 30S subunit. Is located at the subunit interface close to the decoding center, probably blocks exit of the E-site tRNA. This chain is Small ribosomal subunit protein uS7, found in Rhodopseudomonas palustris (strain BisA53).